The primary structure comprises 58 residues: Probable ferredoxin (58 aa).

4Fe-4S ferredoxin-type domains lie at 2–30 (VAKV…LNDD) and 31–58 (GIAT…ITIE). Cys10, Cys13, Cys16, Cys20, Cys40, Cys43, Cys46, and Cys50 together coordinate [4Fe-4S] cluster.

The cofactor is [4Fe-4S] cluster.

Ferredoxins are iron-sulfur proteins that transfer electrons in a wide variety of metabolic reactions. This Methanosarcina thermophila protein is Probable ferredoxin.